The following is a 981-amino-acid chain: Polyhomeotic-like protein 3 (981 aa).

A compositionally biased stretch (low complexity) spans 1 to 28 (MDSEPSSGTSVSTTASSTTTTTITTSSS). Disordered regions lie at residues 1 to 33 (MDSE…MQQP), 102 to 127 (LSSG…TSIL), 224 to 280 (LSSS…TAVT), and 307 to 407 (QIPL…SQSP). Residues 224-255 (LSSSQNGSPKSAGQTQSLTICHNKTTVTSSKI) show a composition bias toward polar residues. Residues serine 231, serine 261, serine 269, and serine 312 each carry the phosphoserine modification. Over residues 256–266 (SQRDPSPESKK) the composition is skewed to basic and acidic residues. Residues 321-340 (QLLLQQQQQQIQPITLQSPS) are compositionally biased toward low complexity. A compositionally biased stretch (polar residues) spans 360–373 (APSNAQPQHCSPVQ). The segment covering 381-395 (VSPNQAQSAQQSVVV) has biased composition (low complexity). 2 positions are modified to phosphothreonine: threonine 607 and threonine 612. Serine 614 carries the phosphoserine modification. The tract at residues 650-690 (KSPSDPTHASAPAPPLLIPAASTRSSSTSLASSTPSLENKP) is disordered. Residues 667–686 (IPAASTRSSSTSLASSTPSL) are compositionally biased toward low complexity. Residues lysine 689 and lysine 730 each participate in a glycyl lysine isopeptide (Lys-Gly) (interchain with G-Cter in SUMO2) cross-link. The short motif at 689–718 (KPPQAIVKPQILTHVIEGFVIQEGLEPFPV) is the HD1 element. Phosphoserine occurs at positions 759 and 760. The FCS-type zinc-finger motif lies at 774-808 (EEMDSELLKCEFCGKMGYPNEFLRSKRFCTMSCAK). Positions 783, 786, 802, and 806 each coordinate Zn(2+). Residue lysine 808 forms a Glycyl lysine isopeptide (Lys-Gly) (interchain with G-Cter in SUMO2) linkage. Disordered regions lie at residues 825 to 844 (RKPD…GPEG) and 863 to 888 (EDVA…ERER). An SAM domain is found at 917–981 (WTVDDVWAFI…CARINSLKDS (65 aa)).

Component of a PRC1-like complex. Ubiquitous expression.

It is found in the nucleus. Component of a Polycomb group (PcG) multiprotein PRC1-like complex, a complex class required to maintain the transcriptionally repressive state of many genes, including Hox genes, throughout development. PcG PRC1 complex acts via chromatin remodeling and modification of histones; it mediates monoubiquitination of histone H2A 'Lys-119', rendering chromatin heritably changed in its expressibility. This is Polyhomeotic-like protein 3 (Phc3) from Mus musculus (Mouse).